The primary structure comprises 199 residues: Thymidine kinase (199 aa).

ATP is bound by residues 9–16 (GAMSSGKS) and 93–96 (DEAQ). Glutamate 94 serves as the catalytic Proton acceptor. 4 residues coordinate Zn(2+): cysteine 151, cysteine 154, cysteine 188, and histidine 191.

It belongs to the thymidine kinase family. As to quaternary structure, homotetramer.

Its subcellular location is the cytoplasm. It carries out the reaction thymidine + ATP = dTMP + ADP + H(+). The chain is Thymidine kinase from Lactobacillus johnsonii (strain CNCM I-12250 / La1 / NCC 533).